Here is a 239-residue protein sequence, read N- to C-terminus: Yolk ferritin (239 aa).

The N-terminal stretch at 1 to 18 (MNSVLFLTLAVCSSLAYG) is a signal peptide. The Ferritin-like diiron domain maps to 27-217 (QNYKENINQL…HAITRLRSFE (191 aa)). Residues glutamate 44 and glutamate 79 each coordinate Fe cation. An insertion; not present in other ferritins region spans residues 105 to 146 (KDACETVMKFVTSDTSGLEEFRDRRMCICGFVATKTINDNCG). Fe cation contacts are provided by glutamate 165 and glutamine 199.

It belongs to the ferritin family. In terms of assembly, oligomer of 12 or 24 subunits. The functional molecule is roughly spherical and contains a central cavity into which the polymeric ferric iron core is deposited. As to expression, midgut gland and bloodstream.

Its subcellular location is the secreted. It carries out the reaction 4 Fe(2+) + O2 + 4 H(+) = 4 Fe(3+) + 2 H2O. Its function is as follows. Stores iron in a soluble, non-toxic, readily available form. Important for iron homeostasis. Has ferroxidase activity. Iron is taken up in the ferrous form and deposited as ferric hydroxides after oxidation. The sequence is that of Yolk ferritin from Lymnaea stagnalis (Great pond snail).